The primary structure comprises 545 residues: 4-coumarate--CoA ligase 2 (545 aa).

ATP contacts are provided by S192, S193, G194, T195, T196, and K200. Residues Y242 and S246 each contribute to the (E)-4-coumaroyl-AMP site. Residue K263 coordinates CoA. Residues 265–334 (DIAQFLELIP…AKFPNAKLGQ (70 aa)) form an SBD1 region. A312, Q334, G335, T339, and M347 together coordinate (E)-4-coumaroyl-AMP. Q334, G335, and T339 together coordinate ATP. Residues 335-402 (GYGMTEAGPV…IRGDQIMKGY (68 aa)) form an SBD2 region. The ATP site is built by D423 and R438. The (E)-4-coumaroyl-AMP site is built by K440 and K444. CoA-binding residues include K446 and G447. K529 is an ATP binding site.

This sequence belongs to the ATP-dependent AMP-binding enzyme family. It depends on Mg(2+) as a cofactor.

It catalyses the reaction (E)-4-coumarate + ATP + CoA = (E)-4-coumaroyl-CoA + AMP + diphosphate. It carries out the reaction (E)-4-coumarate + ATP + H(+) = (E)-4-coumaroyl-AMP + diphosphate. The enzyme catalyses (E)-4-coumaroyl-AMP + CoA = (E)-4-coumaroyl-CoA + AMP + H(+). The protein operates within phytoalexin biosynthesis; 3,4',5-trihydroxystilbene biosynthesis; 3,4',5-trihydroxystilbene from trans-4-coumarate: step 1/2. Carboxylate--CoA ligase that may use 4-coumarate as substrate. Follows a two-step reaction mechanism, wherein the carboxylate substrate first undergoes adenylation by ATP, followed by a thioesterification in the presence of CoA to yield the final CoA thioester. This chain is 4-coumarate--CoA ligase 2 (4CL2), found in Solanum tuberosum (Potato).